A 131-amino-acid chain; its full sequence is MARNATSSRPRKKERKNISSGVAHVAATFNNTMITISDAQGNAIAWSSAGAQGFKGSRKSTPYAAQVAAEDAGRKAREHGMETLEIEVSGPGSGRESALRALQAVGFAITAIRDTTPIPHNGCRPRKRRRV.

This sequence belongs to the universal ribosomal protein uS11 family. As to quaternary structure, part of the 30S ribosomal subunit. Interacts with proteins S7 and S18. Binds to IF-3.

In terms of biological role, located on the platform of the 30S subunit, it bridges several disparate RNA helices of the 16S rRNA. Forms part of the Shine-Dalgarno cleft in the 70S ribosome. This is Small ribosomal subunit protein uS11 from Granulibacter bethesdensis (strain ATCC BAA-1260 / CGDNIH1).